The primary structure comprises 103 residues: Small ribosomal subunit protein uS10 (103 aa).

This sequence belongs to the universal ribosomal protein uS10 family. In terms of assembly, part of the 30S ribosomal subunit.

Functionally, involved in the binding of tRNA to the ribosomes. In Actinobacillus pleuropneumoniae serotype 5b (strain L20), this protein is Small ribosomal subunit protein uS10.